Here is a 359-residue protein sequence, read N- to C-terminus: Membrane-bound lytic murein transglycosylase C (359 aa).

Positions 1 to 16 (MKKYLALALIAPLLIS) are cleaved as a signal peptide. Residue Cys-17 is the site of N-palmitoyl cysteine attachment. Cys-17 carries the S-diacylglycerol cysteine lipid modification.

The protein belongs to the transglycosylase Slt family.

It localises to the cell outer membrane. The catalysed reaction is Exolytic cleavage of the (1-&gt;4)-beta-glycosidic linkage between N-acetylmuramic acid (MurNAc) and N-acetylglucosamine (GlcNAc) residues in peptidoglycan, from either the reducing or the non-reducing ends of the peptidoglycan chains, with concomitant formation of a 1,6-anhydrobond in the MurNAc residue.. Functionally, murein-degrading enzyme. May play a role in recycling of muropeptides during cell elongation and/or cell division. The protein is Membrane-bound lytic murein transglycosylase C of Shigella flexneri serotype 5b (strain 8401).